A 123-amino-acid chain; its full sequence is Unclassified hydrophobin 9 (123 aa).

Positions 1 to 24 (MFFFNTKPIVFLVVLSVVATFAAA) are cleaved as a signal peptide. 4 disulfides stabilise this stretch: Cys-37–Cys-103, Cys-45–Cys-97, Cys-46–Cys-88, and Cys-104–Cys-117.

This sequence belongs to the fungal hydrophobin family. As to quaternary structure, self-assembles to form functional amyloid fibrils called rodlets. Self-assembly into fibrillar rodlets occurs spontaneously at hydrophobic:hydrophilic interfaces and the rodlets further associate laterally to form amphipathic monolayers.

The protein localises to the secreted. The protein resides in the cell wall. Functionally, aerial growth, conidiation, and dispersal of filamentous fungi in the environment rely upon a capability of their secreting small amphipathic proteins called hydrophobins (HPBs) with low sequence identity. Class I can self-assemble into an outermost layer of rodlet bundles on aerial cell surfaces, conferring cellular hydrophobicity that supports fungal growth, development and dispersal; whereas Class II form highly ordered films at water-air interfaces through intermolecular interactions but contribute nothing to the rodlet structure. In Pleurotus ostreatus (strain PC15) (Oyster mushroom), this protein is Unclassified hydrophobin 9.